The chain runs to 394 residues: Dual-specificity RNA methyltransferase RlmN (394 aa).

Catalysis depends on Glu-115, which acts as the Proton acceptor. The Radical SAM core domain maps to 121–360 (EADRATLCVS…VIVRKTRGDD (240 aa)). Cys-128 and Cys-365 are disulfide-bonded. [4Fe-4S] cluster-binding residues include Cys-135, Cys-139, and Cys-142. S-adenosyl-L-methionine-binding positions include 189-190 (GE), Ser-221, 243-245 (SLH), and Asn-322. Cys-365 (S-methylcysteine intermediate) is an active-site residue.

This sequence belongs to the radical SAM superfamily. RlmN family. [4Fe-4S] cluster is required as a cofactor.

It localises to the cytoplasm. It catalyses the reaction adenosine(2503) in 23S rRNA + 2 reduced [2Fe-2S]-[ferredoxin] + 2 S-adenosyl-L-methionine = 2-methyladenosine(2503) in 23S rRNA + 5'-deoxyadenosine + L-methionine + 2 oxidized [2Fe-2S]-[ferredoxin] + S-adenosyl-L-homocysteine. It carries out the reaction adenosine(37) in tRNA + 2 reduced [2Fe-2S]-[ferredoxin] + 2 S-adenosyl-L-methionine = 2-methyladenosine(37) in tRNA + 5'-deoxyadenosine + L-methionine + 2 oxidized [2Fe-2S]-[ferredoxin] + S-adenosyl-L-homocysteine. Functionally, specifically methylates position 2 of adenine 2503 in 23S rRNA and position 2 of adenine 37 in tRNAs. m2A2503 modification seems to play a crucial role in the proofreading step occurring at the peptidyl transferase center and thus would serve to optimize ribosomal fidelity. The sequence is that of Dual-specificity RNA methyltransferase RlmN from Pasteurella multocida (strain Pm70).